Reading from the N-terminus, the 312-residue chain is Protein atonal (312 aa).

Disordered stretches follow at residues 136–174 and 220–248; these read SNVG…TAAA and NDGS…GKQI. Residues 162 to 174 are compositionally biased toward low complexity; sequence PSTTATSTPTAAA. Positions 255 to 307 constitute a bHLH domain; that stretch reads KRRLAANARERRRMQNLNQAFDRLRQYLPCLGNDRQLSKHETLQMAQTYISAL.

Efficient DNA binding requires dimerization with another bHLH protein. Forms a heterodimer with Daughterless. In terms of tissue distribution, proneural clusters and sense organ precursors of the chordotonal organs, optic furrow of the eye-antennal disk and developing brain lobe.

The protein resides in the nucleus. Its function is as follows. Developmental protein involved in neurogenesis. Required for the formation of chordotonal organs and photoreceptors. Seems to bind to E boxes. Specifically required for the photoreceptor R8 selection. This Drosophila melanogaster (Fruit fly) protein is Protein atonal (ato).